Consider the following 483-residue polypeptide: UDP-N-acetylmuramate--L-alanine ligase (483 aa).

112–118 lines the ATP pocket; it reads GTHGKTT.

Belongs to the MurCDEF family.

It is found in the cytoplasm. The catalysed reaction is UDP-N-acetyl-alpha-D-muramate + L-alanine + ATP = UDP-N-acetyl-alpha-D-muramoyl-L-alanine + ADP + phosphate + H(+). It participates in cell wall biogenesis; peptidoglycan biosynthesis. In terms of biological role, cell wall formation. The sequence is that of UDP-N-acetylmuramate--L-alanine ligase from Ralstonia nicotianae (strain ATCC BAA-1114 / GMI1000) (Ralstonia solanacearum).